A 201-amino-acid chain; its full sequence is MSIKGIIAGLGNPGGQYEKTRHNIGFMVINKLITITSASKLSGKKFYCELWKTTTIIDNYLLAKPQTYMNLSGEAIHPLVEWYNITKDNLLVIHDELDLPIGKMKLQQGGGTAGHNGLKSIIHNLGTKDFYRLRIGIGRSPLPSENTVNWVLGHLSMKELTTLNNLFPTIFDALSFFIKDEKETAIRMINSFTLSETVNLS.

Position 17 (tyrosine 17) interacts with tRNA. Histidine 22 serves as the catalytic Proton acceptor. TRNA-binding residues include tyrosine 68, asparagine 70, and asparagine 116.

It belongs to the PTH family. Monomer.

It localises to the cytoplasm. The catalysed reaction is an N-acyl-L-alpha-aminoacyl-tRNA + H2O = an N-acyl-L-amino acid + a tRNA + H(+). Functionally, hydrolyzes ribosome-free peptidyl-tRNAs (with 1 or more amino acids incorporated), which drop off the ribosome during protein synthesis, or as a result of ribosome stalling. Catalyzes the release of premature peptidyl moieties from peptidyl-tRNA molecules trapped in stalled 50S ribosomal subunits, and thus maintains levels of free tRNAs and 50S ribosomes. This Lawsonia intracellularis (strain PHE/MN1-00) protein is Peptidyl-tRNA hydrolase.